Here is a 70-residue protein sequence, read N- to C-terminus: Peptide Hp1035 (70 aa).

The signal sequence occupies residues 1–23 (MKTQFVILLVALVLFQMFAQSEA). Position 36 is a phenylalanine amide (phenylalanine 36). The propeptide occupies 40–70 (GLQDLDMDDLDQLFDGEISQADINFLNQLMR).

This sequence belongs to the non-disulfide-bridged peptide (NDBP) superfamily. Short antimicrobial peptide (group 4) family. Expressed by the venom gland.

It localises to the secreted. It is found in the target cell membrane. Its function is as follows. Amphipathic peptide with antimicrobial activity. The protein is Peptide Hp1035 of Heterometrus petersii (Asian forest scorpion).